The primary structure comprises 1175 residues: MHIKEICLEGFKSYATRTVVSGFDPHFNAITGLNGSGKSNILDSICFVLGITNLQQVRAANLQELVYKQGQAGITKATVSVTFDNSERHRSPLGYEEHPEITVTRQIVVGGRNKYLINGKLAQPSQVQNLFHSVQLNVNNPHFLIMQGRITKVLNMKPPEILSMLEEAAGTRMYENKKEAALKTLEKKQTKVDEINKLLDHEILPALEKLRKEKSQYMQWANGNAELDRLRRFCIAFEYVQAEKIRDNAVLGVGEMKAKLGKIDAETEKTQEEIQEFEKQIKALTQAKEASMGGEVKTLSEKVDSLAQEMTRESSKLNNKEDTLLGEKENVEKIVHSIEDLKKSVKERAAAVKKSEEGAADLKQRFQELSTTLEECEKEHQGVLAGKSSGDEEKCLEDQLRDAKIAVGTAGTELKQLKTKIEHCEKELKERKSQLMSKLEEAIEVENELGARKNDVEHVKKALESIPYNEGQMEALEKDRGAELEVVQRLEDKVRGLSAQLANFQFTYSDPVRNFDRSKVKGVVAKLIKVKDRSSMTALEVTAGGKLYDVVVDSEDTGKQLLQNGALRRRVTIIPLNKIQSYVVQPRVQQATARLVGKDNAELALSLVGYSDELKNAMEYVFGSTFVCKTTDVAKEVAFNRDIRTPSVTLEGDIFQPSGLLTGGSRKGGGDRLRKLHDLAEAESELQGHQKRLADVESQIKELQPLQMKFTDVYAQLELKTYDLSLFLKRAEQNEHHKLGEAVKKLEEELEEAKSQIKEKELAYKNCFDAVSKLENSIKDHDKNREGRLKDLEKNIKTIKAQMQAASKDLKSHENEKEKLVMEEEAMKQEQSSLESHLTSLETQISTLTSEVDEQRAKVDALQKIHDESLAELKLIHAKMKECDTQISGFVTDQEKCLQKLSDMKLERKKLENEVVRMETDHKDCSVKVDKLVEKHTWIASEKQLFGKGGTDYDFESCDPYVAREKLEKLQSDQSGLEKRVNKKVMAMFEKAEDEYNALISKKNTIENDKSKITKVIEELDEKKKETLKVTWVKVNQDFGSIFSTLLPGTMAKLEPPEDGNFLDGLEVRVAFGKVWKQSLSELSGGQRSLLALSLILALLLFKPAPLYILDEVDAALDLSHTQNIGRMIRAHFPHSQFIVVSLKEGMFNNANVLFRTKFVDGVSTVQRTVTKQTK.

The Zinc-hook domain maps to H2–D1161. G32–S39 lines the ATP pocket. Positions R172–Y508 form a coiled coil. In terms of domain architecture, SMC hinge spans S518–A638. Positions L673–L1028 form a coiled coil.

It belongs to the SMC family. SMC2 subfamily. Forms a heterodimer with SMC4. Component of the condensin complex, which contains the SMC2 and SMC4 heterodimer, and three non SMC subunits that probably regulate the complex: CAPH, CAPD2 and CAPG. As to expression, highly expressed in roots and young floral buds.

It is found in the nucleus. Its function is as follows. Central component of the condensin complex, a complex required for conversion of interphase chromatin into mitotic-like condense chromosomes. The condensin complex probably introduces positive supercoils into relaxed DNA in the presence of type I topoisomerases and converts nicked DNA into positive knotted forms in the presence of type II topoisomerases. Also involved in chromosome segregation in meiosis. This chain is Structural maintenance of chromosomes protein 2-1 (SMC2-1), found in Arabidopsis thaliana (Mouse-ear cress).